Here is a 142-residue protein sequence, read N- to C-terminus: Neuritin (142 aa).

Positions 1–27 are cleaved as a signal peptide; that stretch reads MGLKLNGRYISLILAVQIAYLVQAVRA. Glycine 116 is lipidated: GPI-anchor amidated glycine. Positions 117–142 are cleaved as a propeptide — removed in mature form; that stretch reads AAGPLLPALPVLLVSLSAALATWLSF.

The protein belongs to the neuritin family. Component of the outer core of AMPAR complex. AMPAR complex consists of an inner core made of 4 pore-forming GluA/GRIA proteins (GRIA1, GRIA2, GRIA3 and GRIA4) and 4 major auxiliary subunits arranged in a twofold symmetry. One of the two pairs of distinct binding sites is occupied either by CNIH2, CNIH3 or CACNG2, CACNG3. The other harbors CACNG2, CACNG3, CACNG4, CACNG8 or GSG1L. This inner core of AMPAR complex is complemented by outer core constituents binding directly to the GluA/GRIA proteins at sites distinct from the interaction sites of the inner core constituents. Outer core constituents include at least PRRT1, PRRT2, CKAMP44/SHISA9, FRRS1L and NRN1. The proteins of the inner and outer core serve as a platform for other, more peripherally associated AMPAR constituents. Alone or in combination, these auxiliary subunits control the gating and pharmacology of the AMPAR complex and profoundly impact their biogenesis and protein processing.

It localises to the cell membrane. Its subcellular location is the synapse. Promotes neurite outgrowth and especially branching of neuritic processes in primary hippocampal and cortical cells. The chain is Neuritin (NRN1) from Bos taurus (Bovine).